A 281-amino-acid polypeptide reads, in one-letter code: Probable protein phosphatase 2C 9 (281 aa).

Residues 33 to 280 form the PPM-type phosphatase domain; that stretch reads KYGFSLVKGK…DDISCVVVRF (248 aa). Residues Asp-70, Gly-71, Asp-232, and Asp-271 each coordinate Mn(2+).

The protein belongs to the PP2C family. Interacts with phytochromes (via N-terminus). Requires Mg(2+) as cofactor. The cofactor is Mn(2+).

The protein localises to the nucleus. It catalyses the reaction O-phospho-L-seryl-[protein] + H2O = L-seryl-[protein] + phosphate. The catalysed reaction is O-phospho-L-threonyl-[protein] + H2O = L-threonyl-[protein] + phosphate. In terms of biological role, involved in the regulation of phytochrome signaling. May regulate phytochrome-interacting factor 3 (PIF3) through the dephosphorylation of phytochrome. The chain is Probable protein phosphatase 2C 9 from Arabidopsis thaliana (Mouse-ear cress).